Here is a 132-residue protein sequence, read N- to C-terminus: Small ribosomal subunit protein uS8 (132 aa).

The protein belongs to the universal ribosomal protein uS8 family. As to quaternary structure, part of the 30S ribosomal subunit. Contacts proteins S5 and S12.

Its function is as follows. One of the primary rRNA binding proteins, it binds directly to 16S rRNA central domain where it helps coordinate assembly of the platform of the 30S subunit. The chain is Small ribosomal subunit protein uS8 from Parvibaculum lavamentivorans (strain DS-1 / DSM 13023 / NCIMB 13966).